Consider the following 514-residue polypeptide: 2,3-bisphosphoglycerate-independent phosphoglycerate mutase (514 aa).

The Mn(2+) site is built by Asp-14 and Ser-64. Ser-64 functions as the Phosphoserine intermediate in the catalytic mechanism. Substrate contacts are provided by residues His-125, 155–156 (RD), Arg-187, Arg-193, 263–266 (RADR), and Lys-337. 5 residues coordinate Mn(2+): Asp-404, His-408, Asp-445, His-446, and His-464.

The protein belongs to the BPG-independent phosphoglycerate mutase family. Monomer. The cofactor is Mn(2+).

It catalyses the reaction (2R)-2-phosphoglycerate = (2R)-3-phosphoglycerate. Its pathway is carbohydrate degradation; glycolysis; pyruvate from D-glyceraldehyde 3-phosphate: step 3/5. Its function is as follows. Catalyzes the interconversion of 2-phosphoglycerate and 3-phosphoglycerate. The protein is 2,3-bisphosphoglycerate-independent phosphoglycerate mutase of Serratia proteamaculans (strain 568).